The sequence spans 387 residues: [LysW]-aminoadipate semialdehyde/glutamate semialdehyde transaminase (387 aa).

Pyridoxal 5'-phosphate-binding positions include 96–97 (GT) and F123. R126 serves as a coordination point for substrate. 207–210 (DEIQ) is a binding site for pyridoxal 5'-phosphate. K236 carries the N6-(pyridoxal phosphate)lysine modification. S264 lines the substrate pocket. T265 is a binding site for pyridoxal 5'-phosphate.

The protein belongs to the class-III pyridoxal-phosphate-dependent aminotransferase family. LysJ subfamily. Homodimer. Pyridoxal 5'-phosphate is required as a cofactor.

The protein localises to the cytoplasm. The enzyme catalyses [amino-group carrier protein]-C-terminal-gamma-(L-lysyl)-L-glutamate + 2-oxoglutarate = [amino-group carrier protein]-C-terminal-N-(1-carboxy-5-oxopentan-1-yl)-L-glutamine + L-glutamate. It catalyses the reaction [amino-group carrier protein]-C-terminal-gamma-(L-ornithyl)-L-glutamate + 2-oxoglutarate = [amino-group carrier protein]-C-terminal-gamma-(L-glutamyl-5-semialdehyde)-L-glutamate + L-glutamate. Its pathway is amino-acid biosynthesis; L-lysine biosynthesis via AAA pathway; L-lysine from L-alpha-aminoadipate (Thermus route): step 4/5. The protein operates within amino-acid biosynthesis; L-arginine biosynthesis. Involved in both the arginine and lysine biosynthetic pathways. This Sulfolobus acidocaldarius (strain ATCC 33909 / DSM 639 / JCM 8929 / NBRC 15157 / NCIMB 11770) protein is [LysW]-aminoadipate semialdehyde/glutamate semialdehyde transaminase.